A 753-amino-acid polypeptide reads, in one-letter code: 5-methyltetrahydropteroyltriglutamate--homocysteine methyltransferase (753 aa).

5-methyltetrahydropteroyltri-L-glutamate-binding positions include 17 to 20 (RELK) and lysine 117. Residues 431-433 (IGS) and glutamate 484 each bind L-homocysteine. L-methionine contacts are provided by residues 431 to 433 (IGS) and glutamate 484. 5-methyltetrahydropteroyltri-L-glutamate-binding positions include 515-516 (RC) and tryptophan 561. Aspartate 599 serves as a coordination point for L-homocysteine. Aspartate 599 contributes to the L-methionine binding site. Glutamate 605 is a binding site for 5-methyltetrahydropteroyltri-L-glutamate. Positions 641, 643, and 665 each coordinate Zn(2+). The active-site Proton donor is the histidine 694. Residue cysteine 726 participates in Zn(2+) binding.

This sequence belongs to the vitamin-B12 independent methionine synthase family. Zn(2+) is required as a cofactor.

It carries out the reaction 5-methyltetrahydropteroyltri-L-glutamate + L-homocysteine = tetrahydropteroyltri-L-glutamate + L-methionine. It participates in amino-acid biosynthesis; L-methionine biosynthesis via de novo pathway; L-methionine from L-homocysteine (MetE route): step 1/1. Functionally, catalyzes the transfer of a methyl group from 5-methyltetrahydrofolate to homocysteine resulting in methionine formation. This chain is 5-methyltetrahydropteroyltriglutamate--homocysteine methyltransferase, found in Enterobacter sp. (strain 638).